Consider the following 119-residue polypeptide: NLYQFKNMIHCTVPNRSWWHFANYGCYCGRGGSGTPVDDLDRCCQIHDNCYGEAEKISGCWPYIKTYTYDSCQGTLTSCGAANNCAASVCDCDRVAANCFARAPYIDKNYNIDFNARCQ.

Disulfide bonds link Cys-11–Cys-72, Cys-26–Cys-118, Cys-28–Cys-44, Cys-43–Cys-99, Cys-50–Cys-92, Cys-60–Cys-85, and Cys-79–Cys-90. Ca(2+) contacts are provided by Tyr-27, Gly-29, and Gly-31. Residue His-47 is part of the active site. Asp-48 lines the Ca(2+) pocket. Asp-93 is a catalytic residue.

Belongs to the phospholipase A2 family. Group I subfamily. D49 sub-subfamily. It depends on Ca(2+) as a cofactor. Expressed by the venom gland.

The protein localises to the secreted. It carries out the reaction a 1,2-diacyl-sn-glycero-3-phosphocholine + H2O = a 1-acyl-sn-glycero-3-phosphocholine + a fatty acid + H(+). Functionally, PLA2 catalyzes the calcium-dependent hydrolysis of the 2-acyl groups in 3-sn-phosphoglycerides. This is Acidic phospholipase A2 DE-III from Naja melanoleuca (Forest cobra).